We begin with the raw amino-acid sequence, 130 residues long: Small ribosomal subunit protein uS9 (130 aa).

This sequence belongs to the universal ribosomal protein uS9 family.

This chain is Small ribosomal subunit protein uS9, found in Burkholderia pseudomallei (strain K96243).